An 85-amino-acid polypeptide reads, in one-letter code: MASQLIIYSAHVVLLVLVWLLAYTEVVPVLSYIPECAHCLVYYIYAAFNVIYGVATFNDCAEAKVELLQEIKQARAELKQKRIID.

Helical transmembrane passes span 13-33 and 37-57; these read VLLV…LSYI and AHCL…VATF.

Belongs to the DPM3 family.

The protein resides in the endoplasmic reticulum membrane. It functions in the pathway protein modification; protein glycosylation. Stabilizer subunit of the dolichol-phosphate-mannose synthase complex. This chain is Probable dolichol-phosphate mannosyltransferase subunit 3, found in Caenorhabditis briggsae.